A 100-amino-acid polypeptide reads, in one-letter code: NADH-quinone oxidoreductase subunit K (100 aa).

Helical transmembrane passes span 4–24, 28–48, and 60–80; these read YEYY…GVIV, IIAM…AFVA, and VFVF…LGLI.

It belongs to the complex I subunit 4L family. NDH-1 is composed of 14 different subunits. Subunits NuoA, H, J, K, L, M, N constitute the membrane sector of the complex.

The protein resides in the cell inner membrane. It carries out the reaction a quinone + NADH + 5 H(+)(in) = a quinol + NAD(+) + 4 H(+)(out). Functionally, NDH-1 shuttles electrons from NADH, via FMN and iron-sulfur (Fe-S) centers, to quinones in the respiratory chain. The immediate electron acceptor for the enzyme in this species is believed to be ubiquinone. Couples the redox reaction to proton translocation (for every two electrons transferred, four hydrogen ions are translocated across the cytoplasmic membrane), and thus conserves the redox energy in a proton gradient. The sequence is that of NADH-quinone oxidoreductase subunit K from Sulfurihydrogenibium azorense (strain DSM 15241 / OCM 825 / Az-Fu1).